Consider the following 406-residue polypeptide: Phosphopentomutase (406 aa).

Mn(2+) is bound by residues Asp10, Asp305, His310, Asp346, His347, and His358.

The protein belongs to the phosphopentomutase family. Requires Mn(2+) as cofactor.

Its subcellular location is the cytoplasm. The catalysed reaction is 2-deoxy-alpha-D-ribose 1-phosphate = 2-deoxy-D-ribose 5-phosphate. It carries out the reaction alpha-D-ribose 1-phosphate = D-ribose 5-phosphate. It participates in carbohydrate degradation; 2-deoxy-D-ribose 1-phosphate degradation; D-glyceraldehyde 3-phosphate and acetaldehyde from 2-deoxy-alpha-D-ribose 1-phosphate: step 1/2. In terms of biological role, isomerase that catalyzes the conversion of deoxy-ribose 1-phosphate (dRib-1-P) and ribose 1-phosphate (Rib-1-P) to deoxy-ribose 5-phosphate (dRib-5-P) and ribose 5-phosphate (Rib-5-P), respectively. The chain is Phosphopentomutase from Agrobacterium fabrum (strain C58 / ATCC 33970) (Agrobacterium tumefaciens (strain C58)).